The chain runs to 435 residues: MSIITDVYAREVLDSRGNPTLEVEVYTESGAFGRGMVPSGASTGEHEAVELRDGDKSRYLGLGTQKAVDNVNNVIADAIIGFDVRDQQAIDRAMIALDGTPNKGKLGANAILGVSIAVARAAADYLEVPLYTYLGGFNTKVLPTPMMNIINGGSHSDAPIAFQEFMILPVGAPSFKEGLRWGAEVFHALKKILKARGLVTAVGDEGGFAPKFEGTEDGVETIIEAIEAAGYEAGENGIMIGFDCASSEFYDKERKVYDYTKFEGEGAAVRTSAEQIDYLEELVNKYPIITIEDGMDENDWDGWKALTERLGKRVQLVGDDFFVTNTDYLARGIKEGAANSILIKVNQIGTLTETFEAIEMAKEAGYTAVVSHRSGETEDSTIADIAVATNAGQIKTGSLSRTDRIAKYNQLLRIEDQLGEVAVYKGLNSFYNLKK.

Residue Q163 participates in (2R)-2-phosphoglycerate binding. E205 serves as the catalytic Proton donor. Mg(2+) contacts are provided by D243, E292, and D319. (2R)-2-phosphoglycerate contacts are provided by K344, R373, S374, and K395. K344 (proton acceptor) is an active-site residue.

Belongs to the enolase family. Mg(2+) is required as a cofactor.

Its subcellular location is the cytoplasm. The protein localises to the secreted. It is found in the cell surface. It carries out the reaction (2R)-2-phosphoglycerate = phosphoenolpyruvate + H2O. The protein operates within carbohydrate degradation; glycolysis; pyruvate from D-glyceraldehyde 3-phosphate: step 4/5. Functionally, catalyzes the reversible conversion of 2-phosphoglycerate (2-PG) into phosphoenolpyruvate (PEP). It is essential for the degradation of carbohydrates via glycolysis. This Streptococcus suis (strain 98HAH33) protein is Enolase.